The sequence spans 230 residues: 5'-methylthioadenosine/S-adenosylhomocysteine nucleosidase (230 aa).

The Proton acceptor role is filled by E12. Substrate is bound by residues G78, I152, and 173–174; that span reads ME. D197 serves as the catalytic Proton donor.

Belongs to the PNP/UDP phosphorylase family. MtnN subfamily.

It catalyses the reaction S-adenosyl-L-homocysteine + H2O = S-(5-deoxy-D-ribos-5-yl)-L-homocysteine + adenine. It carries out the reaction S-methyl-5'-thioadenosine + H2O = 5-(methylsulfanyl)-D-ribose + adenine. The catalysed reaction is 5'-deoxyadenosine + H2O = 5-deoxy-D-ribose + adenine. Its pathway is amino-acid biosynthesis; L-methionine biosynthesis via salvage pathway; S-methyl-5-thio-alpha-D-ribose 1-phosphate from S-methyl-5'-thioadenosine (hydrolase route): step 1/2. Functionally, catalyzes the irreversible cleavage of the glycosidic bond in both 5'-methylthioadenosine (MTA) and S-adenosylhomocysteine (SAH/AdoHcy) to adenine and the corresponding thioribose, 5'-methylthioribose and S-ribosylhomocysteine, respectively. Also cleaves 5'-deoxyadenosine, a toxic by-product of radical S-adenosylmethionine (SAM) enzymes, into 5-deoxyribose and adenine. In Actinobacillus succinogenes (strain ATCC 55618 / DSM 22257 / CCUG 43843 / 130Z), this protein is 5'-methylthioadenosine/S-adenosylhomocysteine nucleosidase.